We begin with the raw amino-acid sequence, 211 residues long: Urease accessory protein UreF (211 aa).

The disordered stretch occupies residues 71-93 (DDADRETDARTPAPAARHASRSQ).

The protein belongs to the UreF family. UreD, UreF and UreG form a complex that acts as a GTP-hydrolysis-dependent molecular chaperone, activating the urease apoprotein by helping to assemble the nickel containing metallocenter of UreC. The UreE protein probably delivers the nickel.

Its subcellular location is the cytoplasm. Its function is as follows. Required for maturation of urease via the functional incorporation of the urease nickel metallocenter. This is Urease accessory protein UreF from Mycobacterium bovis (strain ATCC BAA-935 / AF2122/97).